Reading from the N-terminus, the 285-residue chain is Secreted alkaline triacylglycerol lipase (285 aa).

The first 20 residues, 1-20, serve as a signal peptide directing secretion; that stretch reads MLFNYQSLLVGVSLISQALS. S159 (nucleophile) is an active-site residue. Active-site charge relay system residues include D215 and H268.

This sequence belongs to the AB hydrolase superfamily. FaeA family.

It is found in the secreted. It catalyses the reaction a triacylglycerol + H2O = a diacylglycerol + a fatty acid + H(+). Secreted alkaline lipase that hydrolyzes acylglycerol lipids such as triacylglycerols and consequently releases free fatty acid. Is able to hydrolyze tributyrin (1,2,3-tributyryl-glycerin). The sequence is that of Secreted alkaline triacylglycerol lipase from Penicillium cyclopium.